Here is a 239-residue protein sequence, read N- to C-terminus: Sugar fermentation stimulation protein homolog (239 aa).

The protein belongs to the SfsA family.

This Methanobrevibacter smithii (strain ATCC 35061 / DSM 861 / OCM 144 / PS) protein is Sugar fermentation stimulation protein homolog.